The chain runs to 424 residues: Serine hydroxymethyltransferase 2 (424 aa).

Residues Leu-125 and 129 to 131 (GHL) contribute to the (6S)-5,6,7,8-tetrahydrofolate site. The residue at position 234 (Lys-234) is an N6-(pyridoxal phosphate)lysine. Glu-250 provides a ligand contact to (6S)-5,6,7,8-tetrahydrofolate.

It belongs to the SHMT family. In terms of assembly, homodimer. Requires pyridoxal 5'-phosphate as cofactor.

The protein localises to the cytoplasm. It catalyses the reaction (6R)-5,10-methylene-5,6,7,8-tetrahydrofolate + glycine + H2O = (6S)-5,6,7,8-tetrahydrofolate + L-serine. It participates in one-carbon metabolism; tetrahydrofolate interconversion. Its pathway is amino-acid biosynthesis; glycine biosynthesis; glycine from L-serine: step 1/1. Catalyzes the reversible interconversion of serine and glycine with tetrahydrofolate (THF) serving as the one-carbon carrier. This reaction serves as the major source of one-carbon groups required for the biosynthesis of purines, thymidylate, methionine, and other important biomolecules. Also exhibits THF-independent aldolase activity toward beta-hydroxyamino acids, producing glycine and aldehydes, via a retro-aldol mechanism. The sequence is that of Serine hydroxymethyltransferase 2 from Burkholderia mallei (strain ATCC 23344).